The following is a 445-amino-acid chain: Tubulin beta-1 chain (445 aa).

Positions 1–4 (MREI) match the MREI motif motif. The GTP site is built by Q11, E69, S138, G142, T143, G144, N204, and N226. Residue E69 coordinates Mg(2+). The interval 424-445 (QYQDATADEQGEFEEEGEEDEA) is disordered. Residues 429–445 (TADEQGEFEEEGEEDEA) show a composition bias toward acidic residues. E438 carries the post-translational modification 5-glutamyl polyglutamate.

The protein belongs to the tubulin family. As to quaternary structure, dimer of alpha and beta chains. A typical microtubule is a hollow water-filled tube with an outer diameter of 25 nm and an inner diameter of 15 nM. Alpha-beta heterodimers associate head-to-tail to form protofilaments running lengthwise along the microtubule wall with the beta-tubulin subunit facing the microtubule plus end conferring a structural polarity. Microtubules usually have 13 protofilaments but different protofilament numbers can be found in some organisms and specialized cells. It depends on Mg(2+) as a cofactor. Some glutamate residues at the C-terminus are polyglycylated, resulting in polyglycine chains on the gamma-carboxyl group. Glycylation is mainly limited to tubulin incorporated into axonemes (cilia and flagella) whereas glutamylation is prevalent in neuronal cells, centrioles, axonemes, and the mitotic spindle. Both modifications can coexist on the same protein on adjacent residues, and lowering polyglycylation levels increases polyglutamylation, and reciprocally. The precise function of polyglycylation is still unclear. In terms of processing, some glutamate residues at the C-terminus are polyglutamylated, resulting in polyglutamate chains on the gamma-carboxyl group. Polyglutamylation plays a key role in microtubule severing by spastin (SPAST). SPAST preferentially recognizes and acts on microtubules decorated with short polyglutamate tails: severing activity by SPAST increases as the number of glutamates per tubulin rises from one to eight, but decreases beyond this glutamylation threshold. In terms of tissue distribution, highly expressed in skeletal muscle.

The protein resides in the cytoplasm. Its subcellular location is the cytoskeleton. In terms of biological role, tubulin is the major constituent of microtubules, a cylinder consisting of laterally associated linear protofilaments composed of alpha- and beta-tubulin heterodimers. Microtubules grow by the addition of GTP-tubulin dimers to the microtubule end, where a stabilizing cap forms. Below the cap, tubulin dimers are in GDP-bound state, owing to GTPase activity of alpha-tubulin. The sequence is that of Tubulin beta-1 chain from Gallus gallus (Chicken).